Reading from the N-terminus, the 151-residue chain is UPF0178 protein RD1_0321 (151 aa).

Belongs to the UPF0178 family.

The polypeptide is UPF0178 protein RD1_0321 (Roseobacter denitrificans (strain ATCC 33942 / OCh 114) (Erythrobacter sp. (strain OCh 114))).